The chain runs to 442 residues: UDP-N-acetylmuramoylalanine--D-glutamate ligase (442 aa).

The protein belongs to the MurCDEF family.

The protein resides in the cytoplasm. The enzyme catalyses UDP-N-acetyl-alpha-D-muramoyl-L-alanine + D-glutamate + ATP = UDP-N-acetyl-alpha-D-muramoyl-L-alanyl-D-glutamate + ADP + phosphate + H(+). Its pathway is cell wall biogenesis; peptidoglycan biosynthesis. Its function is as follows. Cell wall formation. Catalyzes the addition of glutamate to the nucleotide precursor UDP-N-acetylmuramoyl-L-alanine (UMA). The sequence is that of UDP-N-acetylmuramoylalanine--D-glutamate ligase from Buchnera aphidicola subsp. Baizongia pistaciae (strain Bp).